A 782-amino-acid chain; its full sequence is MRRSLAPSQRGGQRLSSRNDFTPPLLKKNKRACQQDLEQERLRQSALRDATNTSDLPLPIRFTANTEYEMAIAKVLARKFKVPIDNYVPDYGGNRTLGVRRRIVRRPLHDPLACNALVLYHAPNYTDHERMSMEPSSVLVHVVVDPLLSNILRPHQREGVRFMYECVEGKRGNFNGCIMADEMGLGKTLQCVALVWTLLKQSAECKPTINKCIIVSPSSLVKNWEKEFTKWLHGRMHCLAMEGGSKENTVRALEQFSMNASTRLGTPVLLISYETFRIYAEILCKYEVGMVICDEGHRLKNSDNLTYQALMGLKTKRRVLLSGTPIQNDLTEYFSLVNFVNPEMLGTAADFKRNFENCILRGQNADSTDKERDRALEKTQELIKLVDQCIIRRTNQILTKYLPVKFEMVICAKLTPIQLQLYTNFLKSDQVRRSLADCKEKASLTALADITTLKKLCSHPNLICEKIAAGEKGFENSQNILPINYNPKGEINPELSGKFKLLDFMLAAIRAHGNDKVVLISNYTQTLDLFELLARKRKYGFVRLDGTMSIKKRSKVVDRFNDPESDCFLFMLSSKAGGCGLNLIGANRLFMFDPDWNPANDEQAMARVWRDGQKKPCYIYRLVASGSIEEKILQRQTHKKSLSSTIIDNNESAEKHFTRDDLKDLFSFDPDILSDTHDKLKCKRCVQNVQMMPPPDDTDCTSHLSQWYHCSNNRGLPDNILAQAWTDSKCVSFVFHHRSQSQKIEATPATETSVEAKLEPERRKRPAMPLSDDSADEDFQGF.

Residues 1–20 (MRRSLAPSQRGGQRLSSRND) are compositionally biased toward polar residues. The tract at residues 1–28 (MRRSLAPSQRGGQRLSSRNDFTPPLLKK) is disordered. Residues 2-9 (RRSLAPSQ) are required for chromatin remodeling, strand pairing activities and coupling of ATPase activity. Thr-22 is modified (phosphothreonine). Positions 168–343 (EGKRGNFNGC…FSLVNFVNPE (176 aa)) constitute a Helicase ATP-binding domain. 181–188 (DEMGLGKT) provides a ligand contact to ATP. The DEGH box signature appears at 294 to 297 (DEGH). Positions 501 to 658 (LLDFMLAAIR…NNESAEKHFT (158 aa)) constitute a Helicase C-terminal domain. The segment covering 741–753 (SQKIEATPATETS) has biased composition (polar residues). The interval 741-782 (SQKIEATPATETSVEAKLEPERRKRPAMPLSDDSADEDFQGF) is disordered. A compositionally biased stretch (acidic residues) spans 773 to 782 (DSADEDFQGF).

Belongs to the SNF2/RAD54 helicase family. Interacts (via N-terminus) with spn-A/Rad51.

The protein resides in the nucleus. In terms of biological role, involved in mitotic DNA repair and meiotic recombination. Functions in the recombinational DNA repair pathway. Essential for interhomolog gene conversion (GC), but may have a less important role in intersister GC than spn-A/Rad51. In the presence of DNA, spn-A/Rad51 enhances the ATPase activity of okr/Rad54. This Drosophila persimilis (Fruit fly) protein is DNA repair and recombination protein RAD54-like.